We begin with the raw amino-acid sequence, 470 residues long: Coproporphyrinogen III oxidase (470 aa).

Residues 12–17 (GGGITG), 41–42 (EA), Lys49, 63–66 (GPDS), Val256, Trp409, and 448–450 (VGI) contribute to the FAD site.

Belongs to the protoporphyrinogen/coproporphyrinogen oxidase family. Coproporphyrinogen III oxidase subfamily. In terms of assembly, monomer. The cofactor is FAD.

Its subcellular location is the cytoplasm. It is found in the cell membrane. The enzyme catalyses coproporphyrinogen III + 3 O2 = coproporphyrin III + 3 H2O2. The protein operates within porphyrin-containing compound metabolism; protoheme biosynthesis. Its activity is regulated as follows. Only weakly inhibited by acifluorfen, in contrast to eukaryotic family members. Weakly inhibited by methylacifluorfen. Bilirubin, biliverdin and hemin are all competitive inhibitors. Its function is as follows. Involved in coproporphyrin-dependent heme b biosynthesis. Catalyzes the oxidation of coproporphyrinogen III to coproporphyrin III. Can also oxidize protoporphyrinogen IX to protoporphyrin-IX. The specific activity for the oxidation of coproporphyrinogen III is much higher than that for the oxidation of protoporphyrinogen IX. Can also oxidize mesoporphyrinogen IX, but not uroporphyrinogen III. This Bacillus subtilis (strain 168) protein is Coproporphyrinogen III oxidase.